The chain runs to 234 residues: UPF0441 protein plu3956 (234 aa).

Disordered regions lie at residues 105-129 and 149-234; these read QAGL…QQSG and SAPS…SVGG. Residues 110–127 are compositionally biased toward low complexity; the sequence is TTTSSTSTNGEAQAQQQQ. Positions 150-175 are enriched in polar residues; sequence APSQPLFSSKSATSPANGQFVDSTGK. 2 stretches are compositionally biased toward low complexity: residues 188–205 and 216–234; these read TVPK…TTIT and QSTM…SVGG.

It belongs to the UPF0441 family.

The protein is UPF0441 protein plu3956 of Photorhabdus laumondii subsp. laumondii (strain DSM 15139 / CIP 105565 / TT01) (Photorhabdus luminescens subsp. laumondii).